Consider the following 295-residue polypeptide: MEKMSRQLPLNPTFIPPPYGVLRSLLENPLKLPLHPEDAFSKEKDKGKKLDDESSSPTVPQSAFLGPTLWDKTLPYDGDTFQLEYMDLEEFLSENGIPPSPSQHDHSPHPPGLQPASSTAPSVMDLSSRATAPLHPGIPSPNCMQSPIRPGQLLPANRNTPSPIDPDTIQVPVGYEPDPADLALSSIPGQEMFDPRKRKFSEEELKPQPMIKKARKVFIPDDLKDDKYWARRRKNNMAAKRSRDARRLKENQIAIRASFLEKENSALRQEVADLRKELGKCKNILAKYEARHGPL.

A compositionally biased stretch (basic and acidic residues) spans 36-52 (PEDAFSKEKDKGKKLDD). Disordered regions lie at residues 36-76 (PEDA…TLPY) and 92-149 (LSEN…SPIR). Residues 225–288 (DDKYWARRRK…GKCKNILAKY (64 aa)) form the bZIP domain. A basic motif region spans residues 227–247 (KYWARRRKNNMAAKRSRDARR). Residues 248 to 255 (LKENQIAI) form a leucine-zipper region.

This sequence belongs to the bZIP family. PAR subfamily. As to quaternary structure, binds DNA specifically as homodimer or heterodimer with other PAR factors.

It is found in the nucleus. The polypeptide is Hepatic leukemia factor (Hlf) (Mus musculus (Mouse)).